The following is a 626-amino-acid chain: tRNA uridine 5-carboxymethylaminomethyl modification enzyme MnmG (626 aa).

13–18 serves as a coordination point for FAD; the sequence is GGGHAG. 273-287 is an NAD(+) binding site; the sequence is GPRYCPSIEDKIHRF.

Belongs to the MnmG family. In terms of assembly, homodimer. Heterotetramer of two MnmE and two MnmG subunits. It depends on FAD as a cofactor.

It localises to the cytoplasm. Its function is as follows. NAD-binding protein involved in the addition of a carboxymethylaminomethyl (cmnm) group at the wobble position (U34) of certain tRNAs, forming tRNA-cmnm(5)s(2)U34. The chain is tRNA uridine 5-carboxymethylaminomethyl modification enzyme MnmG from Acinetobacter baumannii (strain SDF).